A 251-amino-acid polypeptide reads, in one-letter code: Octanoyltransferase (251 aa).

A BPL/LPL catalytic domain is found at 56–237 (ADTGDEIWVV…RLIANLDGES (182 aa)). Substrate contacts are provided by residues 96–103 (RGGQITYH), 168–170 (ALG), and 181–183 (GLS). Catalysis depends on C199, which acts as the Acyl-thioester intermediate.

It belongs to the LipB family.

The protein localises to the cytoplasm. It carries out the reaction octanoyl-[ACP] + L-lysyl-[protein] = N(6)-octanoyl-L-lysyl-[protein] + holo-[ACP] + H(+). It participates in protein modification; protein lipoylation via endogenous pathway; protein N(6)-(lipoyl)lysine from octanoyl-[acyl-carrier-protein]: step 1/2. Its function is as follows. Catalyzes the transfer of endogenously produced octanoic acid from octanoyl-acyl-carrier-protein onto the lipoyl domains of lipoate-dependent enzymes. Lipoyl-ACP can also act as a substrate although octanoyl-ACP is likely to be the physiological substrate. The chain is Octanoyltransferase from Burkholderia ambifaria (strain MC40-6).